Reading from the N-terminus, the 182-residue chain is Receptor activity-modifying protein 2 (182 aa).

A signal peptide spans 1 to 45 (MAPLRVERAPGGSQLAVTSAQRPAALRLPPLLLLLLLLLLGAVST). The Extracellular portion of the chain corresponds to 46–150 (SPESLNQSHP…VQPTFSDPPE (105 aa)). N-linked (GlcNAc...) asparagine glycosylation is found at Asn51, Asn92, and Asn137. Intrachain disulfides connect Cys76–Cys106 and Cys91–Cys138. Residues 151-172 (DVLLAMIIAPICLIPFLVTLVV) traverse the membrane as a helical segment. Residues 173–182 (WRSKDGDAQA) are Cytoplasmic-facing.

It belongs to the RAMP family. Heterodimer of CALCRL and RAMP2; the interaction forms the receptor complex for adrenomedullin/ADM. Heterodimer of CALCR and RAMP2; interaction forms the AMYR2 receptor complex for calcitonin/CALC and amylin/IAPP.

It is found in the cell membrane. Functionally, accessory protein that interacts with and modulates the function of G-protein coupled receptors including calcitonin gene-related peptide type 1 receptor (CALCRL) and calcitonin receptor (CALCR). Required for the transport of CALCRL to the plasma membrane. Together with CALCRL, form a receptor complex for adrenomedullin/ADM. Together with CALCR, act as a receptor complex for calcitonin/CT/CALC. Together with CALCR, also act as a receptor complex for amylin/IAPP. The sequence is that of Receptor activity-modifying protein 2 from Rattus norvegicus (Rat).